The following is a 253-amino-acid chain: Indole-3-glycerol phosphate synthase (253 aa).

Belongs to the TrpC family.

The enzyme catalyses 1-(2-carboxyphenylamino)-1-deoxy-D-ribulose 5-phosphate + H(+) = (1S,2R)-1-C-(indol-3-yl)glycerol 3-phosphate + CO2 + H2O. It functions in the pathway amino-acid biosynthesis; L-tryptophan biosynthesis; L-tryptophan from chorismate: step 4/5. This chain is Indole-3-glycerol phosphate synthase, found in Bacillus cereus (strain ATCC 10987 / NRS 248).